A 443-amino-acid polypeptide reads, in one-letter code: Enolase (443 aa).

Q167 is a binding site for (2R)-2-phosphoglycerate. The Proton donor role is filled by E209. Positions 246, 291, and 318 each coordinate Mg(2+). (2R)-2-phosphoglycerate is bound by residues K343, R372, S373, and K394. The active-site Proton acceptor is the K343.

It belongs to the enolase family. As to quaternary structure, component of the RNA degradosome, a multiprotein complex involved in RNA processing and mRNA degradation. Mg(2+) is required as a cofactor.

The protein localises to the cytoplasm. It is found in the secreted. Its subcellular location is the cell surface. The catalysed reaction is (2R)-2-phosphoglycerate = phosphoenolpyruvate + H2O. Its pathway is carbohydrate degradation; glycolysis; pyruvate from D-glyceraldehyde 3-phosphate: step 4/5. Functionally, catalyzes the reversible conversion of 2-phosphoglycerate (2-PG) into phosphoenolpyruvate (PEP). It is essential for the degradation of carbohydrates via glycolysis. This chain is Enolase, found in Wigglesworthia glossinidia brevipalpis.